The chain runs to 160 residues: 6,7-dimethyl-8-ribityllumazine synthase (160 aa).

5-amino-6-(D-ribitylamino)uracil-binding positions include Trp26, 58–60 (AIE), and 80–82 (VVI). A (2S)-2-hydroxy-3-oxobutyl phosphate-binding site is contributed by 85–86 (ET). The active-site Proton donor is the His88. Residue Asn113 participates in 5-amino-6-(D-ribitylamino)uracil binding. Residue Arg127 participates in (2S)-2-hydroxy-3-oxobutyl phosphate binding.

This sequence belongs to the DMRL synthase family. Homopentamer.

It carries out the reaction (2S)-2-hydroxy-3-oxobutyl phosphate + 5-amino-6-(D-ribitylamino)uracil = 6,7-dimethyl-8-(1-D-ribityl)lumazine + phosphate + 2 H2O + H(+). The protein operates within cofactor biosynthesis; riboflavin biosynthesis; riboflavin from 2-hydroxy-3-oxobutyl phosphate and 5-amino-6-(D-ribitylamino)uracil: step 1/2. Catalyzes the formation of 6,7-dimethyl-8-ribityllumazine by condensation of 5-amino-6-(D-ribitylamino)uracil with 3,4-dihydroxy-2-butanone 4-phosphate. This is the penultimate step in the biosynthesis of riboflavin. The chain is 6,7-dimethyl-8-ribityllumazine synthase from Mycobacteroides abscessus (strain ATCC 19977 / DSM 44196 / CCUG 20993 / CIP 104536 / JCM 13569 / NCTC 13031 / TMC 1543 / L948) (Mycobacterium abscessus).